Consider the following 303-residue polypeptide: MKVLLIAGGWSSERDVSLAGARGIEKALRALGHDVTWFDPATSLDGLLEAASSHDFAFINLHGSPGEDGLVQAMLDTAGCPYQGSGPAGSFLALNKAVSKQLLRRHGILTPDWAFLAARPAADWEPGLGYPLFVKPNTGGSSLCLSRVTQPEGLAPALEAVFAHCGEAIVEPAIPGVEVTCGVLGDTALPPILIRPAEGAFFDYTSKYTPGGATELCPAPLPAEVTAHVQDVTLRAHRLLGLRGYSRADYILRDDGALFLLEVNTLPGMTPTSLVPQEAAAIGLDFPALIARLIELGMTAAGR.

An ATP-grasp domain is found at 100 to 295 (KQLLRRHGIL…FPALIARLIE (196 aa)). 127–180 (GLGYPLFVKPNTGGSSLCLSRVTQPEGLAPALEAVFAHCGEAIVEPAIPGVEVT) contacts ATP. Positions 249, 262, and 264 each coordinate Mg(2+).

It belongs to the D-alanine--D-alanine ligase family. It depends on Mg(2+) as a cofactor. Mn(2+) is required as a cofactor.

The protein resides in the cytoplasm. The enzyme catalyses 2 D-alanine + ATP = D-alanyl-D-alanine + ADP + phosphate + H(+). Its pathway is cell wall biogenesis; peptidoglycan biosynthesis. Its function is as follows. Cell wall formation. In Nitratidesulfovibrio vulgaris (strain DP4) (Desulfovibrio vulgaris), this protein is D-alanine--D-alanine ligase.